We begin with the raw amino-acid sequence, 1158 residues long: MSLDLLSRLKKYIHDEENSDLDSIYAECENAGLTAVVNDVIDTLLLGTSSCFDEDCLEKLFAICSHFADLSSSVRNKVYDLLTSNISSESAILEDMISANATDFTVPQTNLETTGIAFQLTVNSLSSSNQLSVIRSSTNTVKGRKKNPTTNSNWNGISHVNALLDAIITLFQKKLSRVWTTSSERDMFLSLFLKPIYTLMESEINIKNASFRSRLFNIIGLAVQFHNHTTAAETNIIQNLQYFEHLSEYAADLVHIVTVQFNSVTLAEGIIRTLCSLEFNDNDVKGPKQVALFLVRLSSLIPNLCLKQLTQLVKLLDSESYTLRCAIIEVLANVVIDQIHDEAQNEMSESVPATVQSLMDLLSERLLDISPYCRTKVLHVFIKIFDLPIKYPRKRQEIAELVIRCLQDRSSHVRRNAIKLFSKLLTTHPFSVMHNGLLTRNIWEKGLSIIEEQLNSLQPKQQEKVVDSELEVDENLLEDATMIQDDESHEGESHLENSLSEYVDSVPAEEIVKVNLTKRFYLEALQYIDIVEAGAKIISQLLFAKNKSEVIESMDFFVFCNSFGISSSKLYIKKMIHLIWVKGTSDEGNNIQNHVLSCYKTLFFEPPPNSGTNEAANYIARNLISLTYDASLAELTSLEQMLCILMKDGYFSHLVITKLWQVYSYQKKDISRTQRRGSIIVIGMLALGNTDVVMQGLDHLIQIGLGPPGLEDLVLARYTCIAIKRIGKDASGSSNINFPNSHTLCQKLCMLLLRPSFSEEWFGLEEQAIEAIYAVAKHPDELCTNIILLLTKQLFKPSNHENTTSNDDHAMDEDLDDSPEEETLKDEEEIGIRLAHLIFLVGHVAIKQLVYIEYCEAEFKRRKADAERLAVQNSNNPINGQETSEYDLITGTSEDDFSEAMTFIRERELLYGENSLLSRFAPLVVELCSNHKSHNNQSLLLAASLTLSKFMCLSNNFCMEHLPLLITILEKCDNPIIRNNLVIGLADLTVCFNHFIDEISEYLYRRLMDEESSVKKTCFMTLAFLILAGQIKVKGQLGIMARSLEDEDARISDLARMFFTDFAAKDNSVYNNFIDIFSVLSRSAEEQDEDDAKFKRIIRFLTSFIEKERHTKQLAERLAARLDRCKTQRQWDHVVYALSLLPHKADNIQKLIDDGYHE.

Residues histidine 800 to aspartate 826 form a disordered region. Over residues alanine 810–aspartate 826 the composition is skewed to acidic residues.

Belongs to the CND1 (condensin subunit 1) family. As to quaternary structure, component of the condensin complex, which contains the cut14/smc2 and cut3/smc2 heterodimer, and three non SMC subunits that probably regulate the complex: cnd1, cnd2 and cnd3.

It is found in the nucleus. It localises to the cytoplasm. Its subcellular location is the chromosome. Its function is as follows. Regulatory subunit of the condensin complex, a complex required for conversion of interphase chromatin into mitotic-like condense chromosomes. The condensin complex probably introduces positive supercoils into relaxed DNA in the presence of type I topoisomerases and converts nicked DNA into positive knotted forms in the presence of type II topoisomerases. The condensin complex probably also plays a role during interphase. The protein is Condensin complex subunit 1 (cnd1) of Schizosaccharomyces pombe (strain 972 / ATCC 24843) (Fission yeast).